We begin with the raw amino-acid sequence, 590 residues long: Aspartate--tRNA ligase (590 aa).

L-aspartate is bound at residue E172. The segment at 196 to 199 is aspartate; the sequence is QLFK. Residue R218 coordinates L-aspartate. Residues 218-220 and Q227 contribute to the ATP site; that span reads RDE. H449 is a binding site for L-aspartate. E483 contacts ATP. R490 contributes to the L-aspartate binding site. ATP is bound at residue 535-538; it reads GLDR.

The protein belongs to the class-II aminoacyl-tRNA synthetase family. Type 1 subfamily. As to quaternary structure, homodimer.

It localises to the cytoplasm. It carries out the reaction tRNA(Asp) + L-aspartate + ATP = L-aspartyl-tRNA(Asp) + AMP + diphosphate. Functionally, catalyzes the attachment of L-aspartate to tRNA(Asp) in a two-step reaction: L-aspartate is first activated by ATP to form Asp-AMP and then transferred to the acceptor end of tRNA(Asp). The protein is Aspartate--tRNA ligase of Mannheimia succiniciproducens (strain KCTC 0769BP / MBEL55E).